The primary structure comprises 745 residues: Isocitrate dehydrogenase [NADP] 2 (745 aa).

The NADP(+) site is built by N87 and S89. D-threo-isocitrate contacts are provided by S134, N137, R141, R147, and K257. Position 352 (D352) interacts with Mg(2+). Residues Y422 and R550 each coordinate D-threo-isocitrate. Mg(2+)-binding residues include D551 and D555. NADP(+)-binding residues include G587, S588, A589, H592, R603, D605, and R652.

Belongs to the monomeric-type IDH family. As to quaternary structure, may form homotrimers. Also forms homotetramers at low salt concentration, which are dissociated into homodimers, but not into monomers, at high salt concentration (1 M). Mg(2+) is required as a cofactor.

The enzyme catalyses D-threo-isocitrate + NADP(+) = 2-oxoglutarate + CO2 + NADPH. Catalyzes the oxidative decarboxylation of isocitrate to 2-oxoglutarate and carbon dioxide with the concomitant reduction of NADP(+). Cannot use NAD(+). In Mycobacterium tuberculosis (strain ATCC 25618 / H37Rv), this protein is Isocitrate dehydrogenase [NADP] 2.